The sequence spans 527 residues: Probable guanine deaminase (527 aa).

His-79 and His-81 together coordinate Zn(2+). Substrate-binding positions include 81–84, 212–213, 239–242, and Asp-329; these read HAPQ, RF, and HISE. Residues His-239 and Asp-329 each coordinate Zn(2+).

Belongs to the metallo-dependent hydrolases superfamily. ATZ/TRZ family. Zn(2+) is required as a cofactor.

It carries out the reaction guanine + H2O + H(+) = xanthine + NH4(+). Its pathway is purine metabolism; guanine degradation; xanthine from guanine: step 1/1. Functionally, catalyzes the hydrolytic deamination of guanine, producing xanthine and ammonia. This is Probable guanine deaminase from Schizosaccharomyces pombe (strain 972 / ATCC 24843) (Fission yeast).